Here is a 344-residue protein sequence, read N- to C-terminus: Ureide permease 3 (344 aa).

At 1 to 10 the chain is on the extracellular side; it reads MYVIESKGGT. A helical transmembrane segment spans residues 11–31; that stretch reads ITCMLLALLFLGTWPAIMTLT. Residues 32–42 are Cytoplasmic-facing; the sequence is ERRGRLPQHTY. A helical membrane pass occupies residues 43 to 63; sequence LDYTLTNLLAAVIIAFTLGEI. At 64-78 the chain is on the extracellular side; sequence SPSRPNFTTQLSQDN. Residues 79–99 form a helical membrane-spanning segment; that stretch reads WPSVMFAMAGGIFLSLGTLAT. The Cytoplasmic portion of the chain corresponds to 100 to 101; sequence QY. A helical transmembrane segment spans residues 102-122; sequence AWAFVGLSVTEVITASIAVVI. The Extracellular portion of the chain corresponds to 123–136; it reads GTTLNYFLDDRINR. The chain crosses the membrane as a helical span at residues 137–157; the sequence is AEVLFPGVACFLIAVCFGSAV. Residues 158–208 lie on the Cytoplasmic side of the membrane; the sequence is HKSNAADNKSKLQGFKSLETTSSFQMETSSIKEGKAKVGTADFLIEVEKQR. 209–216 contacts ATP; sequence AIKVFGKS. A helical transmembrane segment spans residues 209–229; that stretch reads AIKVFGKSTIIGLAITFFAVP. The Extracellular portion of the chain corresponds to 230-235; that stretch reads KLNVYT. Residues 236–256 form a helical membrane-spanning segment; it reads AFFYFSISSFGVGLILNIIFL. Topologically, residues 257-278 are cytoplasmic; sequence YWPILGLPRSSFKAYLNDWNGR. Residues 279–299 form a helical membrane-spanning segment; sequence GWSFLAGFLCGFGNGLQFMGG. At 300–344 the chain is on the extracellular side; the sequence is QAAGYAAAGAVQIENKHFGGYCCLENTKDHQEKHIHFLSVCYLCS.

It belongs to the plant ureide permease (TC 2.A.7.19) family.

The protein localises to the membrane. Functionally, proton-coupled transporter that transports a wide spectrum of oxo derivatives of heterocyclic nitrogen compounds. This Arabidopsis thaliana (Mouse-ear cress) protein is Ureide permease 3.